The chain runs to 475 residues: Aspartyl/glutamyl-tRNA(Asn/Gln) amidotransferase subunit B (475 aa).

The protein belongs to the GatB/GatE family. GatB subfamily. Heterotrimer of A, B and C subunits.

It carries out the reaction L-glutamyl-tRNA(Gln) + L-glutamine + ATP + H2O = L-glutaminyl-tRNA(Gln) + L-glutamate + ADP + phosphate + H(+). The catalysed reaction is L-aspartyl-tRNA(Asn) + L-glutamine + ATP + H2O = L-asparaginyl-tRNA(Asn) + L-glutamate + ADP + phosphate + 2 H(+). In terms of biological role, allows the formation of correctly charged Asn-tRNA(Asn) or Gln-tRNA(Gln) through the transamidation of misacylated Asp-tRNA(Asn) or Glu-tRNA(Gln) in organisms which lack either or both of asparaginyl-tRNA or glutaminyl-tRNA synthetases. The reaction takes place in the presence of glutamine and ATP through an activated phospho-Asp-tRNA(Asn) or phospho-Glu-tRNA(Gln). This chain is Aspartyl/glutamyl-tRNA(Asn/Gln) amidotransferase subunit B, found in Thermoanaerobacter sp. (strain X514).